A 736-amino-acid polypeptide reads, in one-letter code: Putative ATP-dependent RNA helicase CG14443 (736 aa).

Disordered stretches follow at residues 32-58 (TKSSIWGSSASDISGQSRSLKSSSSVL), 73-166 (GIEG…GERP), 183-237 (NSFK…NSWR), and 265-296 (SFTRSRSPHRNTLCYQDQSKNPSRPSNYNTWK). Low complexity-rich tracts occupy residues 34–58 (SSIWGSSASDISGQSRSLKSSSSVL) and 125–160 (SSESAHSSGSESSSSDSNSGSSSDSDSTTGSSSHGS). The segment covering 190–199 (TSRENKESRS) has biased composition (basic and acidic residues). A compositionally biased stretch (polar residues) spans 277–296 (LCYQDQSKNPSRPSNYNTWK). The Q motif motif lies at 330–358 (LSFERSGFNATILQQLEDQGYDGPTPIQA). A Helicase ATP-binding domain is found at 361 to 534 (WSIAKEGKNI…NKFLGQYTAI (174 aa)). Position 374-381 (374-381 (SGKGTGKT)) interacts with ATP. Residues 482–485 (DNID) carry the DEAD box motif. One can recognise a Helicase C-terminal domain in the interval 561-719 (KVERLMKELT…LLQLAEEKMF (159 aa)).

The protein belongs to the DEAD box helicase family.

It carries out the reaction ATP + H2O = ADP + phosphate + H(+). In terms of biological role, probable ATP-binding RNA helicase. This Drosophila melanogaster (Fruit fly) protein is Putative ATP-dependent RNA helicase CG14443.